The primary structure comprises 903 residues: DNA mismatch repair protein MutS (903 aa).

Residue 655–662 (GPNMAGKS) coordinates ATP.

This sequence belongs to the DNA mismatch repair MutS family.

In terms of biological role, this protein is involved in the repair of mismatches in DNA. It is possible that it carries out the mismatch recognition step. This protein has a weak ATPase activity. The chain is DNA mismatch repair protein MutS from Caulobacter vibrioides (strain ATCC 19089 / CIP 103742 / CB 15) (Caulobacter crescentus).